The chain runs to 376 residues: MNEQQLLENIASLAGAINQYKNEKEPTQVLDAAKANKNTRSYPYSVSRNYSFILNKSNRSKSTAASPPYVIPSTSSNADDANKEPEKQSTSDYVSRKNRHMQLIKKNILEHDLQARKANLESYRAKLEKEYKTLAENKIQQRLSDGTKQLVTIDGLQYITGVSDTKWLEFVSAKGQCPKYLYWNNKSYLLKKKRFLKEVGNSPSAVYCRYYNANGICGKGAACRFVHEPTRKTICPKFLNGRCNKAEDCNLSHELDPRRIPACRYFLLGKCNNPNCRYVHIHYSENAPICFEFAKYGFCELGTSCKNQHILQCTDYAMFGSCNNPQCSLYHGAVSADVPEQTEAPISKTAGSINPEDSGSEIGSNSLESNLDFISV.

Residues 2 to 25 (NEQQLLENIASLAGAINQYKNEKE) adopt a coiled-coil conformation. A disordered region spans residues 60–95 (SKSTAASPPYVIPSTSSNADDANKEPEKQSTSDYVS). Over residues 80 to 89 (DANKEPEKQS) the composition is skewed to basic and acidic residues. A coiled-coil region spans residues 105 to 140 (KKNILEHDLQARKANLESYRAKLEKEYKTLAENKIQ). 4 C3H1-type zinc fingers span residues 202–228 (SPSA…FVHE), 229–256 (PTRK…HELD), 257–283 (PRRI…HIHY), and 284–312 (SENA…HILQ). The tract at residues 347–376 (SKTAGSINPEDSGSEIGSNSLESNLDFISV) is disordered. Residues 349 to 369 (TAGSINPEDSGSEIGSNSLES) show a composition bias toward polar residues.

It localises to the nucleus. The chain is Zinc finger CCCH domain-containing protein C337.12 from Schizosaccharomyces pombe (strain 972 / ATCC 24843) (Fission yeast).